The primary structure comprises 747 residues: Probable type III restriction-modification enzyme HindVI Mod subunit (747 aa).

Residues 267–270 are binding of S-adenosyl methionine; it reads DPPY.

The protein belongs to the N(4)/N(6)-methyltransferase family. Homodimer, also forms a functional restriction-competent complex with Res.

It catalyses the reaction a 2'-deoxyadenosine in DNA + S-adenosyl-L-methionine = an N(6)-methyl-2'-deoxyadenosine in DNA + S-adenosyl-L-homocysteine + H(+). Its function is as follows. A beta subtype methylase that binds the system-specific DNA recognition site 5'-CGAAT-3' and methylates A-4 (of only 1 strand). DNA restriction requires both the Res and Mod subunits. The protein is Probable type III restriction-modification enzyme HindVI Mod subunit of Haemophilus influenzae (strain ATCC 51907 / DSM 11121 / KW20 / Rd).